The following is a 197-amino-acid chain: Penicillin-binding protein activator LpoB (197 aa).

The signal sequence occupies residues 1 to 17 (MIKRMSGIALAALLLSG). The N-palmitoyl cysteine moiety is linked to residue Cys18. Cys18 carries the S-diacylglycerol cysteine lipid modification. The segment at 23–57 (PRGETPSQPPAPTTPAKPSVVPTPTPPVVTPVPQP) is disordered. Positions 29–57 (SQPPAPTTPAKPSVVPTPTPPVVTPVPQP) are enriched in pro residues.

This sequence belongs to the LpoB family. In terms of assembly, interacts with PBP1b.

It localises to the cell outer membrane. Regulator of peptidoglycan synthesis that is essential for the function of penicillin-binding protein 1B (PBP1b). The polypeptide is Penicillin-binding protein activator LpoB (Edwardsiella piscicida).